The sequence spans 606 residues: Serine/threonine-protein kinase A-Raf (606 aa).

Residues 19–91 (GTVKVYLPNK…DGEELIVEVL (73 aa)) enclose the RBD domain. Residues 98 to 144 (MHNFVRKTFFSLAFCDFCLKFLFHGFRCQTCGYKFHQHCSSKVPTVC) form a Phorbol-ester/DAG-type zinc finger. Residues H99, C112, C115, C125, C128, H133, C136, and C144 each contribute to the Zn(2+) site. Residues S157 and S162 each carry the phosphoserine modification. The disordered stretch occupies residues 160 to 207 (DLSGGSRQHEAPSNRPLNELLTPQGPSPRTQHCDPEHFPFPAPANAPL). A Phosphothreonine modification is found at T181. Phosphoserine occurs at positions 186 and 214. Residues 240-290 (STDAAGSRGGSDGTPRGSPSPASVSSGRKSPHSKSPAEQRERKSLADDKKK) are disordered. Position 253 is a phosphothreonine (T253). Residues S257 and S269 each carry the phosphoserine modification. Positions 274–289 (SPAEQRERKSLADDKK) are enriched in basic and acidic residues. Residues 310-570 (VQLLKRIGTG…PQILATIELL (261 aa)) enclose the Protein kinase domain. ATP-binding positions include 316–324 (IGTGSFGTV) and K336. T318 bears the Phosphothreonine mark. D429 serves as the catalytic Proton acceptor.

Belongs to the protein kinase superfamily. TKL Ser/Thr protein kinase family. RAF subfamily. Interacts with TH1L/NELFD. Zn(2+) serves as cofactor. Post-translationally, dephosphorylation of Ser-214 by the SHOC2-MRAS-PP1c (SMP) complex consisting of SHOC2, GTP-bound M-Ras/MRAS and the catalytic subunit of protein phosphatase 1 (PPP1CA, PPP1CB or PPP1CC); this relieves inactivation and stimulates kinase activity. Predominantly in urogenital tissues.

The catalysed reaction is L-seryl-[protein] + ATP = O-phospho-L-seryl-[protein] + ADP + H(+). The enzyme catalyses L-threonyl-[protein] + ATP = O-phospho-L-threonyl-[protein] + ADP + H(+). Functionally, involved in the transduction of mitogenic signals from the cell membrane to the nucleus. May also regulate the TOR signaling cascade. Phosphorylates PFKFB2. In terms of biological role, serves as a positive regulator of myogenic differentiation by inducing cell cycle arrest, the expression of myogenin and other muscle-specific proteins, and myotube formation. The sequence is that of Serine/threonine-protein kinase A-Raf (ARAF) from Homo sapiens (Human).